The primary structure comprises 734 residues: Photosystem I P700 chlorophyll a apoprotein A2 (734 aa).

8 consecutive transmembrane segments (helical) span residues isoleucine 46 to alanine 69, leucine 135 to glutamine 158, leucine 175 to isoleucine 199, methionine 273 to tyrosine 291, leucine 330 to tyrosine 353, alanine 369 to isoleucine 395, alanine 417 to histidine 439, and phenylalanine 517 to valine 535. The [4Fe-4S] cluster site is built by cysteine 559 and cysteine 568. Helical transmembrane passes span alanine 575 to tryptophan 596 and leucine 643 to isoleucine 665. 3 residues coordinate chlorophyll a: histidine 654, methionine 662, and tyrosine 670. A phylloquinone-binding site is contributed by tryptophan 671. A helical transmembrane segment spans residues leucine 707–alanine 727.

The protein belongs to the PsaA/PsaB family. In terms of assembly, the PsaA/B heterodimer binds the P700 chlorophyll special pair and subsequent electron acceptors. PSI consists of a core antenna complex that captures photons, and an electron transfer chain that converts photonic excitation into a charge separation. The eukaryotic PSI reaction center is composed of at least 11 subunits. The cofactor is P700 is a chlorophyll a/chlorophyll a' dimer, A0 is one or more chlorophyll a, A1 is one or both phylloquinones and FX is a shared 4Fe-4S iron-sulfur center..

It localises to the plastid. The protein localises to the chloroplast thylakoid membrane. The enzyme catalyses reduced [plastocyanin] + hnu + oxidized [2Fe-2S]-[ferredoxin] = oxidized [plastocyanin] + reduced [2Fe-2S]-[ferredoxin]. In terms of biological role, psaA and PsaB bind P700, the primary electron donor of photosystem I (PSI), as well as the electron acceptors A0, A1 and FX. PSI is a plastocyanin-ferredoxin oxidoreductase, converting photonic excitation into a charge separation, which transfers an electron from the donor P700 chlorophyll pair to the spectroscopically characterized acceptors A0, A1, FX, FA and FB in turn. Oxidized P700 is reduced on the lumenal side of the thylakoid membrane by plastocyanin. This chain is Photosystem I P700 chlorophyll a apoprotein A2, found in Pinus koraiensis (Korean pine).